A 302-amino-acid polypeptide reads, in one-letter code: Oxygen-dependent coproporphyrinogen-III oxidase (302 aa).

Residue serine 94 coordinates substrate. A divalent metal cation contacts are provided by histidine 98 and histidine 108. Histidine 108 (proton donor) is an active-site residue. 110-112 (NVR) provides a ligand contact to substrate. Positions 147 and 177 each coordinate a divalent metal cation. Residues 242–277 (YVEFNLVWDRGTLFGLQSGGRTESILMSMPPLVRWE) form an important for dimerization region. 260–262 (GGR) lines the substrate pocket.

The protein belongs to the aerobic coproporphyrinogen-III oxidase family. Homodimer. The cofactor is a divalent metal cation.

It is found in the cytoplasm. It catalyses the reaction coproporphyrinogen III + O2 + 2 H(+) = protoporphyrinogen IX + 2 CO2 + 2 H2O. Its pathway is porphyrin-containing compound metabolism; protoporphyrin-IX biosynthesis; protoporphyrinogen-IX from coproporphyrinogen-III (O2 route): step 1/1. Functionally, involved in the heme biosynthesis. Catalyzes the aerobic oxidative decarboxylation of propionate groups of rings A and B of coproporphyrinogen-III to yield the vinyl groups in protoporphyrinogen-IX. This is Oxygen-dependent coproporphyrinogen-III oxidase from Chromobacterium violaceum (strain ATCC 12472 / DSM 30191 / JCM 1249 / CCUG 213 / NBRC 12614 / NCIMB 9131 / NCTC 9757 / MK).